Consider the following 286-residue polypeptide: Nucleotide-binding protein APL_0334 (286 aa).

ATP is bound at residue Gly-8–Ser-15. Asp-56–Asn-59 lines the GTP pocket.

Belongs to the RapZ-like family.

Displays ATPase and GTPase activities. This is Nucleotide-binding protein APL_0334 from Actinobacillus pleuropneumoniae serotype 5b (strain L20).